A 367-amino-acid chain; its full sequence is Putative heat shock 70 kDa protein 7 (367 aa).

This sequence belongs to the heat shock protein 70 family.

This is Putative heat shock 70 kDa protein 7 (HSPA7) from Homo sapiens (Human).